Consider the following 359-residue polypeptide: Peptide chain release factor 1 (359 aa).

Gln233 carries the N5-methylglutamine modification.

This sequence belongs to the prokaryotic/mitochondrial release factor family. In terms of processing, methylated by PrmC. Methylation increases the termination efficiency of RF1.

Its subcellular location is the cytoplasm. Its function is as follows. Peptide chain release factor 1 directs the termination of translation in response to the peptide chain termination codons UAG and UAA. The polypeptide is Peptide chain release factor 1 (Orientia tsutsugamushi (strain Ikeda) (Rickettsia tsutsugamushi)).